A 439-amino-acid chain; its full sequence is Dolichyl-diphosphooligosaccharide--protein glycosyltransferase 48 kDa subunit (439 aa).

The N-terminal stretch at 1 to 25 (MELGAAARAWSLLWLLLPLLGLVGA) is a signal peptide. Over 27–410 (GPRTLVLLDN…YERFIPSAYP (384 aa)) the chain is Lumenal. The helical transmembrane segment at 411–430 (YYASAFSMMVGLFIFSVVFL) threads the bilayer. The Cytoplasmic portion of the chain corresponds to 431–439 (HMKEKEKSD).

It belongs to the DDOST 48 kDa subunit family. In terms of assembly, component of the oligosaccharyltransferase (OST) complex. OST exists in two different complex forms which contain common core subunits RPN1, RPN2, OST48, OST4, DAD1 and TMEM258, either STT3A or STT3B as catalytic subunits, and form-specific accessory subunits. STT3A complex assembly occurs through the formation of 3 subcomplexes. Subcomplex 1 contains RPN1 and TMEM258, subcomplex 2 contains the STT3A-specific subunits STT3A, DC2/OSTC, and KCP2 as well as the core subunit OST4, and subcomplex 3 contains RPN2, DAD1, and OST48. The STT3A complex can form stable complexes with the Sec61 complex or with both the Sec61 and TRAP complexes. Interacts with SMIM22.

It localises to the endoplasmic reticulum membrane. Its pathway is protein modification; protein glycosylation. Functionally, subunit of the oligosaccharyl transferase (OST) complex that catalyzes the initial transfer of a defined glycan (Glc(3)Man(9)GlcNAc(2) in eukaryotes) from the lipid carrier dolichol-pyrophosphate to an asparagine residue within an Asn-X-Ser/Thr consensus motif in nascent polypeptide chains, the first step in protein N-glycosylation. N-glycosylation occurs cotranslationally and the complex associates with the Sec61 complex at the channel-forming translocon complex that mediates protein translocation across the endoplasmic reticulum (ER). All subunits are required for a maximal enzyme activity. Required for the assembly of both SST3A- and SS3B-containing OST complexes. The polypeptide is Dolichyl-diphosphooligosaccharide--protein glycosyltransferase 48 kDa subunit (Sus scrofa (Pig)).